Consider the following 208-residue polypeptide: Methenyltetrahydrofolate cyclohydrolase (208 aa).

A helical membrane pass occupies residues 25 to 46; sequence GAAAISGAMGAALVSMVCNLTI.

This sequence belongs to the cyclodeaminase/cyclohydrolase family. In terms of assembly, homodimer.

The protein resides in the membrane. The enzyme catalyses (6R)-5,10-methenyltetrahydrofolate + H2O = (6R)-10-formyltetrahydrofolate + H(+). It participates in one-carbon metabolism; formaldehyde assimilation via serine pathway. Functionally, required for both C1 and C2 metabolism. The chain is Methenyltetrahydrofolate cyclohydrolase (fchA) from Methylorubrum extorquens (strain ATCC 14718 / DSM 1338 / JCM 2805 / NCIMB 9133 / AM1) (Methylobacterium extorquens).